The primary structure comprises 141 residues: Mu-like prophage FluMu protein gp36 (141 aa).

The protein to phage Mu protein gp36.

This Haemophilus influenzae (strain ATCC 51907 / DSM 11121 / KW20 / Rd) protein is Mu-like prophage FluMu protein gp36.